The primary structure comprises 78 residues: Acyl carrier protein (78 aa).

The Carrier domain maps to 2–77; it reads SDIAERVKKI…DAIKYIGENM (76 aa). The residue at position 37 (Ser-37) is an O-(pantetheine 4'-phosphoryl)serine.

It belongs to the acyl carrier protein (ACP) family. Post-translationally, 4'-phosphopantetheine is transferred from CoA to a specific serine of apo-ACP by AcpS. This modification is essential for activity because fatty acids are bound in thioester linkage to the sulfhydryl of the prosthetic group.

The protein resides in the cytoplasm. It functions in the pathway lipid metabolism; fatty acid biosynthesis. In terms of biological role, carrier of the growing fatty acid chain in fatty acid biosynthesis. The sequence is that of Acyl carrier protein from Magnetococcus marinus (strain ATCC BAA-1437 / JCM 17883 / MC-1).